The chain runs to 209 residues: Large ribosomal subunit protein uL3 (209 aa).

Q150 carries the post-translational modification N5-methylglutamine.

It belongs to the universal ribosomal protein uL3 family. In terms of assembly, part of the 50S ribosomal subunit. Forms a cluster with proteins L14 and L19. In terms of processing, methylated by PrmB.

Its function is as follows. One of the primary rRNA binding proteins, it binds directly near the 3'-end of the 23S rRNA, where it nucleates assembly of the 50S subunit. The chain is Large ribosomal subunit protein uL3 from Buchnera aphidicola subsp. Schizaphis graminum (strain Sg).